Reading from the N-terminus, the 513-residue chain is ATP synthase subunit alpha (513 aa).

An ATP-binding site is contributed by 170 to 177 (GDRQTGKT).

Belongs to the ATPase alpha/beta chains family. As to quaternary structure, F-type ATPases have 2 components, CF(1) - the catalytic core - and CF(0) - the membrane proton channel. CF(1) has five subunits: alpha(3), beta(3), gamma(1), delta(1), epsilon(1). CF(0) has four main subunits: a(1), b(1), b'(1) and c(9-12).

It is found in the cell inner membrane. The enzyme catalyses ATP + H2O + 4 H(+)(in) = ADP + phosphate + 5 H(+)(out). Produces ATP from ADP in the presence of a proton gradient across the membrane. The alpha chain is a regulatory subunit. This is ATP synthase subunit alpha from Gloeobacter violaceus (strain ATCC 29082 / PCC 7421).